The following is a 181-amino-acid chain: ATP-dependent protease subunit HslV (181 aa).

The active site involves Thr-7. Na(+) contacts are provided by Gly-166, Cys-169, and Thr-172.

This sequence belongs to the peptidase T1B family. HslV subfamily. In terms of assembly, a double ring-shaped homohexamer of HslV is capped on each side by a ring-shaped HslU homohexamer. The assembly of the HslU/HslV complex is dependent on binding of ATP.

The protein localises to the cytoplasm. It carries out the reaction ATP-dependent cleavage of peptide bonds with broad specificity.. Its activity is regulated as follows. Allosterically activated by HslU binding. Protease subunit of a proteasome-like degradation complex believed to be a general protein degrading machinery. This chain is ATP-dependent protease subunit HslV, found in Acidovorax ebreus (strain TPSY) (Diaphorobacter sp. (strain TPSY)).